The chain runs to 216 residues: Elongation factor Ts (216 aa).

The tract at residues 80–83 is involved in Mg(2+) ion dislocation from EF-Tu; sequence TDFV.

It belongs to the EF-Ts family.

The protein localises to the cytoplasm. Functionally, associates with the EF-Tu.GDP complex and induces the exchange of GDP to GTP. It remains bound to the aminoacyl-tRNA.EF-Tu.GTP complex up to the GTP hydrolysis stage on the ribosome. This is Elongation factor Ts from Alkaliphilus oremlandii (strain OhILAs) (Clostridium oremlandii (strain OhILAs)).